The following is a 293-amino-acid chain: uncharacterized protein (293 aa).

In terms of domain architecture, HTH lysR-type spans 1–58; it reads MELKQLITFITAAEHVNFTLTAKMLNYAQSSVTSQIKSLEEEIGTPLFERLGKRLILT. The segment at residues 18–37 is a DNA-binding region (H-T-H motif); sequence FTLTAKMLNYAQSSVTSQIK.

Belongs to the LysR transcriptional regulatory family.

It is found in the cytoplasm. This is an uncharacterized protein from Bacillus subtilis (strain 168).